The sequence spans 338 residues: Glyceraldehyde-3-phosphate dehydrogenase (338 aa).

NAD(+)-binding positions include 11 to 12 (TI) and Gly-109. 138 to 140 (SCN) provides a ligand contact to D-glyceraldehyde 3-phosphate. Residue Cys-139 is the Nucleophile of the active site. NAD(+) is bound at residue Arg-167. Residues Thr-169 and 192 to 193 (HA) contribute to the D-glyceraldehyde 3-phosphate site. An NAD(+)-binding site is contributed by Gln-299.

It belongs to the glyceraldehyde-3-phosphate dehydrogenase family. As to quaternary structure, homotetramer.

It is found in the cytoplasm. It carries out the reaction D-glyceraldehyde 3-phosphate + phosphate + NADP(+) = (2R)-3-phospho-glyceroyl phosphate + NADPH + H(+). The enzyme catalyses D-glyceraldehyde 3-phosphate + phosphate + NAD(+) = (2R)-3-phospho-glyceroyl phosphate + NADH + H(+). It functions in the pathway carbohydrate degradation; glycolysis; pyruvate from D-glyceraldehyde 3-phosphate: step 1/5. This Thermoplasma volcanium (strain ATCC 51530 / DSM 4299 / JCM 9571 / NBRC 15438 / GSS1) protein is Glyceraldehyde-3-phosphate dehydrogenase.